A 56-amino-acid polypeptide reads, in one-letter code: Endoregulin (56 aa).

The chain crosses the membrane as a helical span at residues 25–45 (LTVIGLFTSTFLLFVLFAVVF).

Homooligomer. Can also form heterooligomers with other sarcoplasmic/endoplasmic reticulum calcium ATPase (SERCA) regulators ARLN, PLN, SLN and STRIT1/DWORF. Monomer. Interacts as a monomer with ATP2A2/SERCA2; the interaction results in inhibition of ATP2A2 Ca(2+) affinity. Largely expressed in non-muscle tissues with the exception of weak expression in body wall muscles at 14.5 dpc. Expressed in epithelial cells of the trachea, bronchus, lung, intestine, pancreas, and liver.

It localises to the endoplasmic reticulum membrane. Functionally, inhibits the activity of the calcium ATPases ATP2A2/SERCA2 and ATP2A3/SERCA3 by decreasing their apparent affinity for Ca(2+). This chain is Endoregulin (Erln), found in Mus musculus (Mouse).